Here is a 78-residue protein sequence, read N- to C-terminus: Large ribosomal subunit protein bL28 (78 aa).

This sequence belongs to the bacterial ribosomal protein bL28 family.

In Aromatoleum aromaticum (strain DSM 19018 / LMG 30748 / EbN1) (Azoarcus sp. (strain EbN1)), this protein is Large ribosomal subunit protein bL28.